We begin with the raw amino-acid sequence, 127 residues long: Protein yippee-like 4 (127 aa).

Residues 27–124 enclose the Yippee domain; the sequence is RTYSCVHCRA…IEMSHMVKDN (98 aa). 4 residues coordinate Zn(2+): Cys31, Cys34, Cys87, and Cys90. Phosphothreonine is present on residues Thr92 and Thr93. Tyr98 bears the Phosphotyrosine mark.

It belongs to the yippee family.

The protein localises to the nucleus. The protein resides in the nucleolus. The sequence is that of Protein yippee-like 4 (YPEL4) from Chlorocebus aethiops (Green monkey).